Here is a 267-residue protein sequence, read N- to C-terminus: Putative phosphoenolpyruvate synthase regulatory protein (267 aa).

147-154 (GVSRSGKT) contributes to the ADP binding site.

The protein belongs to the pyruvate, phosphate/water dikinase regulatory protein family. PSRP subfamily.

The catalysed reaction is [pyruvate, water dikinase] + ADP = [pyruvate, water dikinase]-phosphate + AMP + H(+). The enzyme catalyses [pyruvate, water dikinase]-phosphate + phosphate + H(+) = [pyruvate, water dikinase] + diphosphate. Its function is as follows. Bifunctional serine/threonine kinase and phosphorylase involved in the regulation of the phosphoenolpyruvate synthase (PEPS) by catalyzing its phosphorylation/dephosphorylation. The sequence is that of Putative phosphoenolpyruvate synthase regulatory protein from Cupriavidus necator (strain ATCC 17699 / DSM 428 / KCTC 22496 / NCIMB 10442 / H16 / Stanier 337) (Ralstonia eutropha).